The sequence spans 346 residues: Holliday junction branch migration complex subunit RuvB (346 aa).

The segment at 1–182 (MSEPARLISP…FGIPVRLSFY (182 aa)) is large ATPase domain (RuvB-L). Residues L21, R22, G63, K66, T67, T68, 129-131 (EDF), R172, Y182, and R219 contribute to the ATP site. T67 is a Mg(2+) binding site. A small ATPAse domain (RuvB-S) region spans residues 183 to 253 (TVEELELIVR…IADEALTRLL (71 aa)). The interval 256–346 (NVGFDQLDKR…AQFRLFQEDN (91 aa)) is head domain (RuvB-H). Residues R292, R311, and R316 each contribute to the DNA site.

Belongs to the RuvB family. Homohexamer. Forms an RuvA(8)-RuvB(12)-Holliday junction (HJ) complex. HJ DNA is sandwiched between 2 RuvA tetramers; dsDNA enters through RuvA and exits via RuvB. An RuvB hexamer assembles on each DNA strand where it exits the tetramer. Each RuvB hexamer is contacted by two RuvA subunits (via domain III) on 2 adjacent RuvB subunits; this complex drives branch migration. In the full resolvosome a probable DNA-RuvA(4)-RuvB(12)-RuvC(2) complex forms which resolves the HJ.

The protein localises to the cytoplasm. The catalysed reaction is ATP + H2O = ADP + phosphate + H(+). In terms of biological role, the RuvA-RuvB-RuvC complex processes Holliday junction (HJ) DNA during genetic recombination and DNA repair, while the RuvA-RuvB complex plays an important role in the rescue of blocked DNA replication forks via replication fork reversal (RFR). RuvA specifically binds to HJ cruciform DNA, conferring on it an open structure. The RuvB hexamer acts as an ATP-dependent pump, pulling dsDNA into and through the RuvAB complex. RuvB forms 2 homohexamers on either side of HJ DNA bound by 1 or 2 RuvA tetramers; 4 subunits per hexamer contact DNA at a time. Coordinated motions by a converter formed by DNA-disengaged RuvB subunits stimulates ATP hydrolysis and nucleotide exchange. Immobilization of the converter enables RuvB to convert the ATP-contained energy into a lever motion, pulling 2 nucleotides of DNA out of the RuvA tetramer per ATP hydrolyzed, thus driving DNA branch migration. The RuvB motors rotate together with the DNA substrate, which together with the progressing nucleotide cycle form the mechanistic basis for DNA recombination by continuous HJ branch migration. Branch migration allows RuvC to scan DNA until it finds its consensus sequence, where it cleaves and resolves cruciform DNA. The sequence is that of Holliday junction branch migration complex subunit RuvB from Rhizobium johnstonii (strain DSM 114642 / LMG 32736 / 3841) (Rhizobium leguminosarum bv. viciae).